We begin with the raw amino-acid sequence, 136 residues long: Large ribosomal subunit protein uL22 (136 aa).

The protein belongs to the universal ribosomal protein uL22 family. Part of the 50S ribosomal subunit.

This protein binds specifically to 23S rRNA; its binding is stimulated by other ribosomal proteins, e.g. L4, L17, and L20. It is important during the early stages of 50S assembly. It makes multiple contacts with different domains of the 23S rRNA in the assembled 50S subunit and ribosome. In terms of biological role, the globular domain of the protein is located near the polypeptide exit tunnel on the outside of the subunit, while an extended beta-hairpin is found that lines the wall of the exit tunnel in the center of the 70S ribosome. This chain is Large ribosomal subunit protein uL22, found in Bacteroides thetaiotaomicron (strain ATCC 29148 / DSM 2079 / JCM 5827 / CCUG 10774 / NCTC 10582 / VPI-5482 / E50).